Reading from the N-terminus, the 416-residue chain is MNKQSWLLNLSLLKTHPAFRAVFLARFISIVSLGLLGVAVPVQIQMMTHSTWQVGLSVTLTGGAMFVGLMVGGVLADRYERKKVILLARGTCGIGFIGLCLNALLPEPSLLAIYLLGLWDGFFASLGVTALLAATPALVGRENLMQAGAITMLTVRLGSVISPMIGGLLLATGGVAWNYGLAAAGTFITLLPLLSLPALPPPPQPREHPLKSLLAGFRFLLASPLVGGIALLGGLLTMASAVRVLYPALADNWQMSAAQIGFLYAAIPLGAAIGALTSGKLAHSVRPGLLMLLSTLGAFLAIGLFGLMPMWILGVVCLALFGWLSAVSSLLQYTMLQTQTPEAMLGRINGLWTAQNVTGDAIGAALLGGLGAMMTPVASASASGFGLLIIGVLLLLVLVELRRFRQTPPQVTASGS.

At 1–21 (MNKQSWLLNLSLLKTHPAFRA) the chain is on the cytoplasmic side. A helical membrane pass occupies residues 22–42 (VFLARFISIVSLGLLGVAVPV). Residues 43–55 (QIQMMTHSTWQVG) are Periplasmic-facing. A helical transmembrane segment spans residues 56–76 (LSVTLTGGAMFVGLMVGGVLA). Topologically, residues 77-83 (DRYERKK) are cytoplasmic. Residues 84–104 (VILLARGTCGIGFIGLCLNAL) form a helical membrane-spanning segment. Topologically, residues 105 to 109 (LPEPS) are periplasmic. Residues 110 to 130 (LLAIYLLGLWDGFFASLGVTA) traverse the membrane as a helical segment. Over 131-156 (LLAATPALVGRENLMQAGAITMLTVR) the chain is Cytoplasmic. The helical transmembrane segment at 157–177 (LGSVISPMIGGLLLATGGVAW) threads the bilayer. Residue Asn178 is a topological domain, periplasmic. The chain crosses the membrane as a helical span at residues 179-199 (YGLAAAGTFITLLPLLSLPAL). Residues 200–218 (PPPPQPREHPLKSLLAGFR) lie on the Cytoplasmic side of the membrane. Residues 219-239 (FLLASPLVGGIALLGGLLTMA) traverse the membrane as a helical segment. Topologically, residues 240-256 (SAVRVLYPALADNWQMS) are periplasmic. Residues 257–277 (AAQIGFLYAAIPLGAAIGALT) traverse the membrane as a helical segment. Over 278-287 (SGKLAHSVRP) the chain is Cytoplasmic. The chain crosses the membrane as a helical span at residues 288–307 (GLLMLLSTLGAFLAIGLFGL). Topologically, residues 308-313 (MPMWIL) are periplasmic. The chain crosses the membrane as a helical span at residues 314 to 336 (GVVCLALFGWLSAVSSLLQYTML). At 337 to 356 (QTQTPEAMLGRINGLWTAQN) the chain is on the cytoplasmic side. The chain crosses the membrane as a helical span at residues 357-377 (VTGDAIGAALLGGLGAMMTPV). A topological domain (periplasmic) is located at residue Ala378. The chain crosses the membrane as a helical span at residues 379–399 (SASASGFGLLIIGVLLLLVLV). At 400–416 (ELRRFRQTPPQVTASGS) the chain is on the cytoplasmic side.

Belongs to the major facilitator superfamily. EntS (TC 2.A.1.38) family.

It is found in the cell inner membrane. Its function is as follows. Component of an export pathway for enterobactin. This Escherichia coli O6:K15:H31 (strain 536 / UPEC) protein is Enterobactin exporter EntS.